The primary structure comprises 118 residues: UPF0102 protein DICTH_1420 (118 aa).

Belongs to the UPF0102 family.

In Dictyoglomus thermophilum (strain ATCC 35947 / DSM 3960 / H-6-12), this protein is UPF0102 protein DICTH_1420.